We begin with the raw amino-acid sequence, 907 residues long: Coatomer subunit beta'-1 (907 aa).

WD repeat units follow at residues 13–52 (QRSE…MVKS), 55–94 (VSEL…KVKV), 97–136 (AHTD…MCTQ), 140–180 (GHSH…PNFT), 183–224 (GHQK…CVQT), 227–266 (GHTH…LENT), 269–309 (YGLE…ASMD), 351–389 (SCDL…NRSF), and 461–501 (RIDV…SYLE). 2 stretches are compositionally biased toward acidic residues: residues 850–866 (ETED…EEVL) and 874–887 (STDE…DEPE). The disordered stretch occupies residues 850-887 (ETEDALDENGEPDEEVLEENKVEESTDEAVEVDADEPE).

It belongs to the WD repeat COPB2 family. As to quaternary structure, oligomeric complex that consists of at least the alpha, beta, beta', gamma, delta, epsilon and zeta subunits.

Its subcellular location is the cytoplasm. The protein localises to the golgi apparatus membrane. It localises to the cytoplasmic vesicle. The protein resides in the COPI-coated vesicle membrane. The coatomer is a cytosolic protein complex that binds to dilysine motifs and reversibly associates with Golgi non-clathrin-coated vesicles, which further mediate biosynthetic protein transport from the ER, via the Golgi up to the trans Golgi network. Coatomer complex is required for budding from Golgi membranes, and is essential for the retrograde Golgi-to-ER transport of dilysine-tagged proteins. In Oryza sativa subsp. japonica (Rice), this protein is Coatomer subunit beta'-1.